A 363-amino-acid polypeptide reads, in one-letter code: S-adenosylmethionine:tRNA ribosyltransferase-isomerase (363 aa).

Belongs to the QueA family. In terms of assembly, monomer.

Its subcellular location is the cytoplasm. It carries out the reaction 7-aminomethyl-7-carbaguanosine(34) in tRNA + S-adenosyl-L-methionine = epoxyqueuosine(34) in tRNA + adenine + L-methionine + 2 H(+). Its pathway is tRNA modification; tRNA-queuosine biosynthesis. Its function is as follows. Transfers and isomerizes the ribose moiety from AdoMet to the 7-aminomethyl group of 7-deazaguanine (preQ1-tRNA) to give epoxyqueuosine (oQ-tRNA). The protein is S-adenosylmethionine:tRNA ribosyltransferase-isomerase of Magnetococcus marinus (strain ATCC BAA-1437 / JCM 17883 / MC-1).